A 169-amino-acid polypeptide reads, in one-letter code: Small ribosomal subunit protein uS9 (169 aa).

Disordered stretches follow at residues 1-29 (MVEPTGIEDVQEYDENSEEYPAEYTTETP) and 128-169 (MDPE…YSKR). Acidic residues predominate over residues 9–21 (DVQEYDENSEEYP). Residues 150-169 (VERKKAGLKKARKAPQYSKR) show a composition bias toward basic residues.

Belongs to the universal ribosomal protein uS9 family.

The polypeptide is Small ribosomal subunit protein uS9 (Thermobifida fusca (strain YX)).